A 489-amino-acid polypeptide reads, in one-letter code: Betaine aldehyde dehydrogenase (489 aa).

Residues T26 and D93 each contribute to the K(+) site. 150–152 (GAW) serves as a coordination point for NAD(+). The active-site Charge relay system is the K162. Position 176–179 (176–179 (KPSE)) interacts with NAD(+). I180 contacts K(+). Residue 229–232 (GVET) participates in NAD(+) binding. Residue L245 coordinates K(+). Catalysis depends on E251, which acts as the Proton acceptor. NAD(+) contacts are provided by G253, C285, and E386. C285 functions as the Nucleophile in the catalytic mechanism. C285 bears the Cysteine sulfenic acid (-SOH) mark. Residues K456 and G459 each contribute to the K(+) site. The active-site Charge relay system is the E463.

This sequence belongs to the aldehyde dehydrogenase family. In terms of assembly, dimer of dimers. K(+) serves as cofactor.

The enzyme catalyses betaine aldehyde + NAD(+) + H2O = glycine betaine + NADH + 2 H(+). It functions in the pathway amine and polyamine biosynthesis; betaine biosynthesis via choline pathway; betaine from betaine aldehyde: step 1/1. Functionally, involved in the biosynthesis of the osmoprotectant glycine betaine. Catalyzes the irreversible oxidation of betaine aldehyde to the corresponding acid. The chain is Betaine aldehyde dehydrogenase from Paraburkholderia xenovorans (strain LB400).